The primary structure comprises 185 residues: Probable NEDD8-conjugating enzyme Ubc12-like (185 aa).

The interval lysine 8–glutamine 29 is disordered. Over residues glutamine 16 to lysine 28 the composition is skewed to polar residues. The 146-residue stretch at alanine 31 to valine 176 folds into the UBC core domain. Catalysis depends on cysteine 114, which acts as the Glycyl thioester intermediate.

This sequence belongs to the ubiquitin-conjugating enzyme family. UBC12 subfamily.

The protein operates within protein modification; protein neddylation. Its function is as follows. Accepts the ubiquitin-like protein NEDD8/RUB1 from the ECR1-AXR1 E1 complex and catalyzes its covalent attachment to other proteins. The chain is Probable NEDD8-conjugating enzyme Ubc12-like (RCE2) from Arabidopsis thaliana (Mouse-ear cress).